A 325-amino-acid chain; its full sequence is MQTLAQHLTSKAVNESLAQLILTLADTSKAISHAVRHGALAGVLGATEQENVQGETQKKLDIITNDMLKDALKADGTVRGLASEEEDHVVEVSANGQYLVCFDPLDGSSNIDINSLVGTIFSVLPAPQGELTEASFLQSGRNQLAAGYVLYGPSTMLALTTGQGVQLFTLHPETNEFLLTNATMSISPDTSEFAINMSNQRFWEAPMQTYIADLLLGKIGPREKSFNMRWIAAMVGDVHRVLSRGGIFTYPTDNKDPKKPYKLRLMYEANPMAFLVEQAGGKASTGYETILDIQPTQIHQRVAVILGSANEVDACLSYHGIDSRK.

Mg(2+) is bound by residues Glu84, Asp103, Leu105, and Asp106. Residues 106-109 (DGSS), Asn196, and Lys262 each bind substrate. A Mg(2+)-binding site is contributed by Glu268.

This sequence belongs to the FBPase class 1 family. In terms of assembly, homotetramer. Mg(2+) is required as a cofactor.

It is found in the cytoplasm. It carries out the reaction beta-D-fructose 1,6-bisphosphate + H2O = beta-D-fructose 6-phosphate + phosphate. The protein operates within carbohydrate biosynthesis; gluconeogenesis. The chain is Fructose-1,6-bisphosphatase class 1 from Shewanella oneidensis (strain ATCC 700550 / JCM 31522 / CIP 106686 / LMG 19005 / NCIMB 14063 / MR-1).